Reading from the N-terminus, the 142-residue chain is Sorting nexin-3 (142 aa).

One can recognise a PX domain in the interval 21–138; that stretch reads NFLEIEVRNP…AAFVQDPNWD (118 aa). 5 residues coordinate a 1,2-diacyl-sn-glycero-3-phospho-(1D-myo-inositol-3-phosphate): Arg-64, Ser-66, Lys-90, Arg-95, and Arg-104.

This sequence belongs to the sorting nexin family.

Its subcellular location is the cytoplasm. The protein localises to the golgi apparatus membrane. The protein resides in the prevacuolar compartment membrane. Required for retention of late Golgi membrane proteins. Component of the retrieval machinery that functions by direct interaction with the cytosolic tails of certain TGN membrane proteins during the sorting/budding process at the prevacuolar compartment. Binds phosphatidylinositol 3-phosphate (PtdIns(P3)). This chain is Sorting nexin-3 (snx-3), found in Neurospora crassa (strain ATCC 24698 / 74-OR23-1A / CBS 708.71 / DSM 1257 / FGSC 987).